A 62-amino-acid polypeptide reads, in one-letter code: Flavodoxin (62 aa).

The Flavodoxin-like domain maps to isoleucine 4–leucine 62.

Belongs to the flavodoxin family. FMN serves as cofactor.

In terms of biological role, low-potential electron donor to a number of redox enzymes. NifF is the electron donor to nitrogenase. The chain is Flavodoxin (nifF) from Klebsiella oxytoca.